Reading from the N-terminus, the 498-residue chain is ATP synthase subunit beta, chloroplastic (498 aa).

Position 172–179 (172–179 (GGAGVGKT)) interacts with ATP.

The protein belongs to the ATPase alpha/beta chains family. F-type ATPases have 2 components, CF(1) - the catalytic core - and CF(0) - the membrane proton channel. CF(1) has five subunits: alpha(3), beta(3), gamma(1), delta(1), epsilon(1). CF(0) has four main subunits: a(1), b(1), b'(1) and c(9-12).

It localises to the plastid. Its subcellular location is the chloroplast thylakoid membrane. It catalyses the reaction ATP + H2O + 4 H(+)(in) = ADP + phosphate + 5 H(+)(out). In terms of biological role, produces ATP from ADP in the presence of a proton gradient across the membrane. The catalytic sites are hosted primarily by the beta subunits. This Morus indica (Mulberry) protein is ATP synthase subunit beta, chloroplastic.